We begin with the raw amino-acid sequence, 917 residues long: Hexokinase-1 (917 aa).

M1 bears the N-acetylmethionine mark. Residues 1–10 (MIAAQLLAYY) are mitochondrial-binding peptide (MBP). Hexokinase domains follow at residues 16–458 (DDQV…MVTA) and 464–906 (AEQH…LITA). ATP-binding positions include R30 and 84 to 89 (DLGGSS). Residues 73–207 (DGSEKGDFIA…DYDANIVAVV (135 aa)) are hexokinase small subdomain 1. 84–91 (DLGGSSFR) is a D-glucose 6-phosphate binding site. Residues S155, 172–173 (TK), and 208–209 (ND) contribute to the D-glucose site. The segment at 208–447 (NDTVGTMMTC…SDVRFLLSES (240 aa)) is hexokinase large subdomain 1. Residues D209 and T232 each contribute to the D-glucose 6-phosphate site. D-glucose-binding positions include N235, E260, and 291-294 (QLFE). S337 is modified (phosphoserine). ATP is bound at residue N345. 413–415 (DGS) serves as a coordination point for D-glucose 6-phosphate. 425–426 (RR) is an ATP binding site. D-glucose 6-phosphate is bound by residues S449 and 532-536 (DLGGT). A hexokinase small subdomain 2 region spans residues 521–655 (DGTENGDFLA…EFDLDVVAVV (135 aa)). Position 532–537 (532–537 (DLGGTN)) interacts with ATP. D-glucose is bound by residues 603–604 (SF), 620–621 (TK), and 656–657 (ND). Residues 656–895 (NDTVGTMMTC…CNVSFLLSED (240 aa)) are hexokinase large subdomain 2. The D-glucose 6-phosphate site is built by D657 and T680. T680 provides a ligand contact to ATP. D-glucose-binding positions include 682 to 683 (SN), E708, and E742. Residues 747-748 (GM), 784-788 (TKFLS), and 863-867 (TLYKL) contribute to the ATP site. D-glucose 6-phosphate-binding positions include 861–863 (DGT) and S897.

Belongs to the hexokinase family. As to quaternary structure, monomer. Interacts with RABL2/RABL2A; binds preferentially to GTP-bound RABL2. Interacts with VDAC1. The HK1-VDAC1 complex interacts with ATF2. Interacts (via N-terminal spermatogenic cell-specific region) with PFKM (via C-terminus). Interacts with SMAD5.

It localises to the mitochondrion outer membrane. The protein resides in the cytoplasm. Its subcellular location is the cytosol. It catalyses the reaction a D-hexose + ATP = a D-hexose 6-phosphate + ADP + H(+). The catalysed reaction is D-fructose + ATP = D-fructose 6-phosphate + ADP + H(+). The enzyme catalyses D-glucose + ATP = D-glucose 6-phosphate + ADP + H(+). It carries out the reaction D-mannose + ATP = D-mannose 6-phosphate + ADP + H(+). It catalyses the reaction D-glucosamine + ATP = D-glucosamine 6-phosphate + ADP + H(+). It functions in the pathway carbohydrate metabolism; hexose metabolism. Its pathway is carbohydrate degradation; glycolysis; D-glyceraldehyde 3-phosphate and glycerone phosphate from D-glucose: step 1/4. Its activity is regulated as follows. Hexokinase is an allosteric enzyme inhibited by its product D-glucose 6-phosphate. Hexokinase activity is inhibited by N-acetyl-D-glucosamine. Functionally, catalyzes the phosphorylation of various hexoses, such as D-glucose, D-glucosamine, D-fructose, D-mannose and 2-deoxy-D-glucose, to hexose 6-phosphate (D-glucose 6-phosphate, D-glucosamine 6-phosphate, D-fructose 6-phosphate, D-mannose 6-phosphate and 2-deoxy-D-glucose 6-phosphate, respectively). Does not phosphorylate N-acetyl-D-glucosamine. Mediates the initial step of glycolysis by catalyzing phosphorylation of D-glucose to D-glucose 6-phosphate. Involved in innate immunity and inflammation by acting as a pattern recognition receptor for bacterial peptidoglycan. When released in the cytosol, N-acetyl-D-glucosamine component of bacterial peptidoglycan inhibits the hexokinase activity of HK1 and causes its dissociation from mitochondrial outer membrane, thereby activating the NLRP3 inflammasome. The sequence is that of Hexokinase-1 from Pongo abelii (Sumatran orangutan).